A 546-amino-acid chain; its full sequence is Protein FAM124A (546 aa).

3 disordered regions span residues 1–37 (MDPKAGGGGEEDDCVDSGAETGGSDYSHLSSTSSELS), 285–361 (KFPK…QRSK), and 488–546 (SSSS…EFYI). Positions 24–36 (SDYSHLSSTSSEL) are enriched in low complexity. Positions 285-302 (KFPKPGRVHHSSEKKRHS) are enriched in basic residues. Composition is skewed to polar residues over residues 304 to 324 (PLPSTAVPSHTPGSSQQSPLN) and 347 to 361 (ANSTPNPPWSFQRSK). Positions 488 to 511 (SSSSATARAAPPAPSTSTLTDSSP) are enriched in low complexity.

This sequence belongs to the FAM124 family.

In Pongo abelii (Sumatran orangutan), this protein is Protein FAM124A (FAM124A).